The sequence spans 207 residues: ATP-dependent Clp protease proteolytic subunit (207 aa).

The active-site Nucleophile is the Ser-111. Residue His-136 is part of the active site.

This sequence belongs to the peptidase S14 family. Fourteen ClpP subunits assemble into 2 heptameric rings which stack back to back to give a disk-like structure with a central cavity, resembling the structure of eukaryotic proteasomes. Component of the ClpAP and ClpXP complexes.

The protein localises to the cytoplasm. It catalyses the reaction Hydrolysis of proteins to small peptides in the presence of ATP and magnesium. alpha-casein is the usual test substrate. In the absence of ATP, only oligopeptides shorter than five residues are hydrolyzed (such as succinyl-Leu-Tyr-|-NHMec, and Leu-Tyr-Leu-|-Tyr-Trp, in which cleavage of the -Tyr-|-Leu- and -Tyr-|-Trp bonds also occurs).. Its function is as follows. Cleaves peptides in various proteins in a process that requires ATP hydrolysis. Has a chymotrypsin-like activity. Plays a major role in the degradation of misfolded proteins. This Salmonella enteritidis PT4 (strain P125109) protein is ATP-dependent Clp protease proteolytic subunit.